The primary structure comprises 418 residues: Methylmalonic aciduria type A protein, mitochondrial (418 aa).

The N-terminal 65 residues, 1 to 65, are a transit peptide targeting the mitochondrion; that stretch reads MPMLLPHPHQ…LLSDGLKRKL (65 aa). GTP contacts are provided by residues 150 to 158, Asp292, and 328 to 330; these read GPPGAGKST and SAR.

This sequence belongs to the SIMIBI class G3E GTPase family. ArgK/MeaB subfamily. As to quaternary structure, homodimer. Interacts with MMUT (the apoenzyme form); the interaction is GTP dependent. As to expression, widely expressed. Highest expression is observed in liver and skeletal muscle.

Its subcellular location is the mitochondrion. The protein localises to the cytoplasm. It catalyses the reaction GTP + H2O = GDP + phosphate + H(+). Its activity is regulated as follows. GTPase activity is stimulated by MMUT. Its function is as follows. GTPase, binds and hydrolyzes GTP. Involved in intracellular vitamin B12 metabolism, mediates the transport of cobalamin (Cbl) into mitochondria for the final steps of adenosylcobalamin (AdoCbl) synthesis. Functions as a G-protein chaperone that assists AdoCbl cofactor delivery from MMAB to the methylmalonyl-CoA mutase (MMUT). Plays a dual role as both a protectase and a reactivase for MMUT. Protects MMUT from progressive inactivation by oxidation by decreasing the rate of the formation of the oxidized inactive cofactor hydroxocobalamin (OH2Cbl). Additionally acts a reactivase by promoting the replacement of OH2Cbl by the active cofactor AdoCbl, restoring the activity of MMUT in the presence and hydrolysis of GTP. The sequence is that of Methylmalonic aciduria type A protein, mitochondrial from Homo sapiens (Human).